The primary structure comprises 124 residues: MVKLTSIAAGVAAIAAGVAAAPATTTLSPSDERVNLVELGVYVSDIRAHLAQYYLFQAAHPTETYPVEIAEAVFNYGDFTTMLTGIPAEQVTRVITGVPWYSTRLRPAISSALSKDGIYTAIPK.

A signal peptide spans 1–20 (MVKLTSIAAGVAAIAAGVAA).

The protein belongs to the SRP1/TIP1 family. Seripauperin subfamily.

The protein is Seripauperin-19 (PAU19) of Saccharomyces cerevisiae (strain ATCC 204508 / S288c) (Baker's yeast).